The chain runs to 395 residues: Probable alcohol dehydrogenase EutG (395 aa).

Residues Asp57, 116–120 (GSVLD), 156–160 (TTAGT), Lys178, and 197–201 (LTEGV) contribute to the NAD(+) site. Residues Asp212, His216, His281, and His295 each coordinate Fe cation. Positions 295 and 354 each coordinate NAD(+).

It belongs to the iron-containing alcohol dehydrogenase family. Requires Fe cation as cofactor.

Its subcellular location is the bacterial microcompartment. The catalysed reaction is ethanol + NAD(+) = acetaldehyde + NADH + H(+). Its pathway is amine and polyamine degradation; ethanolamine degradation. Functionally, may act on the acetaldehyde produced from the degradation of ethanolamine, producing ethanol. Active on acetaldehyde and isobutyraldehyde in vitro. In vitro works equally well with NADH or NADPH. The chain is Probable alcohol dehydrogenase EutG (eutG) from Escherichia coli (strain K12).